Here is a 165-residue protein sequence, read N- to C-terminus: Chorismate pyruvate-lyase (165 aa).

Substrate is bound by residues M35, R77, L115, and E156.

The protein belongs to the UbiC family. Monomer.

It localises to the cytoplasm. It catalyses the reaction chorismate = 4-hydroxybenzoate + pyruvate. The protein operates within cofactor biosynthesis; ubiquinone biosynthesis. Its function is as follows. Removes the pyruvyl group from chorismate, with concomitant aromatization of the ring, to provide 4-hydroxybenzoate (4HB) for the ubiquinone pathway. The chain is Chorismate pyruvate-lyase from Salmonella gallinarum (strain 287/91 / NCTC 13346).